A 344-amino-acid polypeptide reads, in one-letter code: DNA fragmentation factor subunit beta (344 aa).

Residues 7–83 (QPKCVKLRAL…LLTAGETWHG (77 aa)) enclose the CIDE-N domain.

In terms of assembly, heterodimer of DFFA and DFFB. Interacts with H1-1.

It localises to the cytoplasm. The protein resides in the nucleus. Its activity is regulated as follows. Inhibited by DFFA (DFF45). Nuclease that induces DNA fragmentation and chromatin condensation during apoptosis. Degrades naked DNA and induces apoptotic morphology. The polypeptide is DNA fragmentation factor subunit beta (Dffb) (Mus musculus (Mouse)).